We begin with the raw amino-acid sequence, 315 residues long: tRNA U34 carboxymethyltransferase (315 aa).

Carboxy-S-adenosyl-L-methionine is bound by residues K79, W93, K98, G117, 142–144 (DPS), 169–170 (VE), Y193, and R307.

The protein belongs to the class I-like SAM-binding methyltransferase superfamily. CmoB family. In terms of assembly, homotetramer.

It catalyses the reaction carboxy-S-adenosyl-L-methionine + 5-hydroxyuridine(34) in tRNA = 5-carboxymethoxyuridine(34) in tRNA + S-adenosyl-L-homocysteine + H(+). Catalyzes carboxymethyl transfer from carboxy-S-adenosyl-L-methionine (Cx-SAM) to 5-hydroxyuridine (ho5U) to form 5-carboxymethoxyuridine (cmo5U) at position 34 in tRNAs. The sequence is that of tRNA U34 carboxymethyltransferase from Helicobacter hepaticus (strain ATCC 51449 / 3B1).